The primary structure comprises 85 residues: Large ribosomal subunit protein bL27 (85 aa).

Residues 1–20 (MAHKKGASSSRNGRDSNAQR) are disordered. Residues 7 to 19 (ASSSRNGRDSNAQ) are compositionally biased toward polar residues.

Belongs to the bacterial ribosomal protein bL27 family.

The polypeptide is Large ribosomal subunit protein bL27 (Kineococcus radiotolerans (strain ATCC BAA-149 / DSM 14245 / SRS30216)).